The primary structure comprises 1434 residues: Probable ATP-dependent RNA helicase spindle-E (1434 aa).

A Helicase ATP-binding domain is found at 125 to 292 (LAAINAHPVI…FATTNSIPPV (168 aa)). Position 138–145 (138–145 (GETGCGKT)) interacts with ATP. Residues 238-241 (DEVH) carry the DEAH box motif. The Helicase C-terminal domain maps to 339–526 (KIIVIIDNME…NSVLKAKVLN (188 aa)). In terms of domain architecture, Tudor spans 938-1001 (AGDITKGMMV…RLMPRELTEQ (64 aa)).

The protein belongs to the DEAD box helicase family. DEAH subfamily.

The protein localises to the cytoplasm. It catalyses the reaction ATP + H2O = ADP + phosphate + H(+). In terms of biological role, probable ATP-binding RNA helicase which plays a central role during spermatogenesis and oogenesis by repressing transposable elements and preventing their mobilization, which is essential for the germline integrity. Acts via the piRNA metabolic process, which mediates the repression of transposable elements during meiosis by forming complexes composed of piRNAs and Piwi and govern the methylation and subsequent repression of transposons. Involved in the repression of LTR retrotransposon copia. Also involved in telomere regulation by repressing specialized telomeric retroelements HeT-A, TAHRE, and TART; Drosophila telomeres being maintained by transposition of specialized telomeric retroelements. Involved in telomeric trans-silencing, a repression mechanism by which a transposon or a transgene inserted in subtelomeric heterochromatin has the capacity to repress in trans in the female germline, a homologous transposon, or transgene located in euchromatin. Involved in the repression of testis-expressed Stellate genes by the homologous Su(Ste) repeats. Required for anteroposterior and dorsoventral axis formation during oogenesis. The protein is Probable ATP-dependent RNA helicase spindle-E (spn-E) of Drosophila sechellia (Fruit fly).